A 271-amino-acid chain; its full sequence is Phosphatidylinositol transfer protein beta isoform (271 aa).

The residue at position 215 (Lys215) is an N6-acetyllysine. Residue Ser262 is modified to Phosphoserine.

This sequence belongs to the PtdIns transfer protein family. PI transfer class I subfamily. Post-translationally, constitutive phosphorylation of Ser-262 has no effect on phospholipid transfer activity but is required for Golgi targeting. Expressed abundantly in brain, kidney, liver, and lung, but in a lesser amount in testis.

The protein localises to the golgi apparatus. It is found in the golgi apparatus membrane. The protein resides in the endoplasmic reticulum membrane. It catalyses the reaction a 1,2-diacyl-sn-glycero-3-phosphocholine(in) = a 1,2-diacyl-sn-glycero-3-phosphocholine(out). The enzyme catalyses a 1,2-diacyl-sn-glycero-3-phospho-(1D-myo-inositol)(in) = a 1,2-diacyl-sn-glycero-3-phospho-(1D-myo-inositol)(out). It carries out the reaction an N-(acyl)-sphingosylphosphocholine(in) = an N-(acyl)-sphingosylphosphocholine(out). Its activity is regulated as follows. Phosphatidylinositol transfer activity is inhibited by N-ethylmaleimide. Functionally, catalyzes the transfer of phosphatidylinositol between membranes. Also catalyzes the transfer of phosphatidylcholine and sphingomyelin between membranes. Required for COPI-mediated retrograde transport from the Golgi to the endoplasmic reticulum; phosphatidylinositol and phosphatidylcholine transfer activity is essential for this function. This Rattus norvegicus (Rat) protein is Phosphatidylinositol transfer protein beta isoform (Pitpnb).